Here is a 339-residue protein sequence, read N- to C-terminus: Ornithine utilization regulator (339 aa).

Residues Thr-241–Ala-338 enclose the HTH araC/xylS-type domain. 2 consecutive DNA-binding regions (H-T-H motif) follow at residues Glu-258 to Gly-279 and Leu-305 to Thr-328.

Functionally, probably activates the ArgJ gene that encodes ornithine acetyltransferase. Binds to its own promoter-operator region. Probably binds ornithine. The protein is Ornithine utilization regulator (oruR) of Pseudomonas aeruginosa (strain ATCC 15692 / DSM 22644 / CIP 104116 / JCM 14847 / LMG 12228 / 1C / PRS 101 / PAO1).